The chain runs to 280 residues: Ribosomal RNA small subunit methyltransferase A (280 aa).

Positions 11, 13, 37, 57, 85, and 106 each coordinate S-adenosyl-L-methionine.

This sequence belongs to the class I-like SAM-binding methyltransferase superfamily. rRNA adenine N(6)-methyltransferase family. RsmA subfamily.

It localises to the cytoplasm. It carries out the reaction adenosine(1518)/adenosine(1519) in 16S rRNA + 4 S-adenosyl-L-methionine = N(6)-dimethyladenosine(1518)/N(6)-dimethyladenosine(1519) in 16S rRNA + 4 S-adenosyl-L-homocysteine + 4 H(+). Functionally, specifically dimethylates two adjacent adenosines (A1518 and A1519) in the loop of a conserved hairpin near the 3'-end of 16S rRNA in the 30S particle. May play a critical role in biogenesis of 30S subunits. This chain is Ribosomal RNA small subunit methyltransferase A, found in Campylobacter concisus (strain 13826).